The sequence spans 237 residues: Lectin alpha chain (237 aa).

Glu-8 and Asp-10 together coordinate Mn(2+). 4 residues coordinate Ca(2+): Asp-10, Tyr-12, Asn-14, and Asp-19. Tyr-12 is a binding site for a carbohydrate. Asp-19, His-24, and Ser-34 together coordinate Mn(2+). A carbohydrate is bound at residue 99-100; the sequence is LY. Asp-208 contributes to the Ca(2+) binding site. Arg-228 contributes to the a carbohydrate binding site.

Belongs to the leguminous lectin family. In terms of assembly, equilibrium between homodimer and homotetramer. Oligomerization is pH-dependent with homotetramers forming at pH 6.5 and above. The beta and gamma chains are produced by partial proteolytic processing of the lectin alpha chain by an asparaginyl endopeptidase. Mixture of 60% alpha lectin and 40% of its beta and gamma proteolytic fragments.

In terms of biological role, D-mannose/D-glucose-binding lectin. Has anti-inflammatory activity in rats. Induces histamine release in mast cells from rat. Induces lymphocyte proliferation and IFNG production. This chain is Lectin alpha chain, found in Dioclea guianensis.